The primary structure comprises 49 residues: Large ribosomal subunit protein bL33B (49 aa).

It belongs to the bacterial ribosomal protein bL33 family.

The protein is Large ribosomal subunit protein bL33B of Bacillus licheniformis (strain ATCC 14580 / DSM 13 / JCM 2505 / CCUG 7422 / NBRC 12200 / NCIMB 9375 / NCTC 10341 / NRRL NRS-1264 / Gibson 46).